Here is a 315-residue protein sequence, read N- to C-terminus: Zinc metalloproteinase nas-4 (315 aa).

The N-terminal stretch at 1 to 20 (MMTIQRYSLVFCAIFATCWT) is a signal peptide. N71 carries an N-linked (GlcNAc...) asparagine glycan. The 196-residue stretch at 95–290 (NAIKQIYRRW…RKINKLYNCP (196 aa)) folds into the Peptidase M12A domain. Intrachain disulfides connect C137/C289 and C160/C179. H187 serves as a coordination point for Zn(2+). The active site involves E188. Positions 191 and 197 each coordinate Zn(2+). Residues 291 to 315 (GVSGNNNNNNNNQINSNSIVNHPQV) form a disordered region.

It depends on Zn(2+) as a cofactor. In terms of tissue distribution, digestive tract. Found in the pharynx cells of the procorpus, metacorpus, isthmus and terminal bulb, and in the terminal bulb lumen.

The protein resides in the secreted. Metalloprotease. May be involved in digestion. This chain is Zinc metalloproteinase nas-4 (nas-4), found in Caenorhabditis elegans.